Here is a 317-residue protein sequence, read N- to C-terminus: MRVIFMGTPLFAVPSLRAVAEADNDVEIVLVVTGKDKPRRSQRAEPEPTPVKKAAKELGLAVLEIDDVKDARFADTIARYRPDVIVVAAFRILPPAVYELARLGSFNLHASLLPRYRGAAPVNWTIINGDRETGVTTFFLGRKVDTGNIILQQRTPVAPEETAGELTERLADIGAGVVLKTLKRIRDGEAEPTIQDDAMATRAPKLTSETTRIDWAEPVDAICDFVRGLSPKPSAWTVFNHRKVKIYRVAPGMFQLPEQDEQQKVPGALVVDGTRMFVMALDGWVEILSLQMEGKRKMGAADFCCGFRCEEECPSFS.

111–114 (SLLP) is a binding site for (6S)-5,6,7,8-tetrahydrofolate.

The protein belongs to the Fmt family.

The catalysed reaction is L-methionyl-tRNA(fMet) + (6R)-10-formyltetrahydrofolate = N-formyl-L-methionyl-tRNA(fMet) + (6S)-5,6,7,8-tetrahydrofolate + H(+). Its function is as follows. Attaches a formyl group to the free amino group of methionyl-tRNA(fMet). The formyl group appears to play a dual role in the initiator identity of N-formylmethionyl-tRNA by promoting its recognition by IF2 and preventing the misappropriation of this tRNA by the elongation apparatus. The polypeptide is Methionyl-tRNA formyltransferase (Chlorobium phaeobacteroides (strain BS1)).